A 444-amino-acid chain; its full sequence is Tol-Pal system protein TolB (444 aa).

An N-terminal signal peptide occupies residues 1-19; it reads MRNIIYFILSLLFSVTSYA.

This sequence belongs to the TolB family. The Tol-Pal system is composed of five core proteins: the inner membrane proteins TolA, TolQ and TolR, the periplasmic protein TolB and the outer membrane protein Pal. They form a network linking the inner and outer membranes and the peptidoglycan layer.

The protein localises to the periplasm. Its function is as follows. Part of the Tol-Pal system, which plays a role in outer membrane invagination during cell division and is important for maintaining outer membrane integrity. This Rickettsia rickettsii (strain Sheila Smith) protein is Tol-Pal system protein TolB.